The sequence spans 436 residues: Protein GOLM2 (436 aa).

Met-1 is subject to N-acetylmethionine. Topologically, residues 1 to 14 (MVGFGANRRAGRLP) are cytoplasmic. Residues 15–35 (SLVLVVLLVVIVVLAFNYWSI) form a helical; Signal-anchor for type II membrane protein membrane-spanning segment. Residues 35 to 198 (ISSRHVLLQE…EEQKQETQKI (164 aa)) adopt a coiled-coil conformation. The Lumenal portion of the chain corresponds to 36-436 (SSRHVLLQEE…YGKQHFNDVL (401 aa)). Residues 225 to 247 (ADKNEEPSSNHIPHGKEQIKRGG) show a composition bias toward basic and acidic residues. A disordered region spans residues 225 to 436 (ADKNEEPSSN…YGKQHFNDVL (212 aa)). 2 positions are modified to phosphoserine: Ser-233 and Ser-275. A compositionally biased stretch (polar residues) spans 305 to 321 (NHNGNPGTSKQNPSSPL). A phosphoserine mark is found at Ser-328 and Ser-332. The segment covering 344 to 362 (ATKDRVSDFHKLKQSRFFD) has biased composition (basic and acidic residues). A Phosphoserine modification is found at Ser-366. Acidic residues predominate over residues 399-418 (YNEEEDGDGGEEDVQDDEER). The segment covering 426 to 436 (DYGKQHFNDVL) has biased composition (basic and acidic residues).

Belongs to the GOLM family.

The protein localises to the membrane. The chain is Protein GOLM2 from Homo sapiens (Human).